The sequence spans 506 residues: MFSLQDLCRKNLFLPLEPLGKHVVQRLGLYWKGHGSLKQMGQCFVCIDQTWILSIHKALQIAASEGNEDIVKLLILWNGNLKYAIIGALEGRHYDLIQKYYNQIGDCHEILPLIQDPKIYERCHELNVTCTFQCLFQHAIKDNMLPILQKYGQDLNGNRRMVQLLYEMACRLQNYDIIKWIGFNLQVYNLEAIFSIAFVRKDLTLYSLGYMLLLNRMSTEDRNFISIITRHLEYASKKGLLDFVLESLKYGGQVDTVLFQAVKYNHRKILAHFIHHVPREIVEKLILHAVESRASRKTFNLLLSSINYCMNPFVKKLLHAVVKHKFMLIIKLLLERPKKKINLVNAALFKLVKYSTYPEIVKYMKEFSVNPEMVIKMAARLMRVDLIKKISKDAWENKLERIKHLKQMVHTMNHRNGKNLIMYNIYDITGYTYLNAKEAFNLTRFYAVHNATCLFKEMCKNCFVHDLIQLRELLEDCLHIANRHAYIQIAETANEYIKYIDDITPK.

ANK repeat units follow at residues 54 to 83, 253 to 283, and 313 to 343; these read SIHK…NLKY, QVDT…EIVE, and FVKK…KINL.

The protein belongs to the asfivirus MGF 505 family.

Functionally, plays a role in virus cell tropism, and may be required for efficient virus replication in macrophages. The polypeptide is Protein MGF 505-9R (African swine fever virus (isolate Tick/Malawi/Lil 20-1/1983) (ASFV)).